The following is a 69-amino-acid chain: DNA gyrase inhibitor YacG (69 aa).

Residues Cys-13, Cys-16, Cys-32, and Cys-36 each coordinate Zn(2+).

It belongs to the DNA gyrase inhibitor YacG family. As to quaternary structure, interacts with GyrB. Requires Zn(2+) as cofactor.

Functionally, inhibits all the catalytic activities of DNA gyrase by preventing its interaction with DNA. Acts by binding directly to the C-terminal domain of GyrB, which probably disrupts DNA binding by the gyrase. This Neisseria gonorrhoeae (strain ATCC 700825 / FA 1090) protein is DNA gyrase inhibitor YacG.